The primary structure comprises 495 residues: MRINPTTSGSAVSTLEEKNLGRIAQIIGPVLDVVFPPGKMPNIYNALVVKGRDTVGQQINVICEVQQLLGNNRVRAVAMSATDGLTRGMEVIDTGAALSVPVGGATLGRIFNVLGEPIDNLGPVDTRTTSPIHRSAPAFIQLDTKLSIFETGIKVVDLLAPYRRGGKIGLFGGAGVGKTVLIMELINNIAKAHGGVSVFGGVGERTREGNDLYMEMKESGVINEKNIAESKVALVYGQMNEPPGARMRVGLTALTMAEYFRDVNEQDVLLFIDNIFRFVQAGSEVSALLGRMPSAVGYQPTLSTEMGSLQERITSTKEGSITSIQAVYVPADDLTDPAPATTFAHLDATTVLSRGLSAKGIYPAVDPLDSTSTMLQPRIVGEEHYETAQRVKQTLQRYKELQDIIAILGLDELSEEDRLTVARARKIERFLSQPFFVAEVFTGSPGKYVGLAETIRGFQLILSGELDSLPEQAFYLVGNIDEATAKAMNLEGEKK.

Residue 172-179 coordinates ATP; it reads GGAGVGKT.

This sequence belongs to the ATPase alpha/beta chains family. F-type ATPases have 2 components, CF(1) - the catalytic core - and CF(0) - the membrane proton channel. CF(1) has five subunits: alpha(3), beta(3), gamma(1), delta(1), epsilon(1). CF(0) has four main subunits: a(1), b(1), b'(1) and c(9-12).

The protein localises to the plastid. Its subcellular location is the chloroplast thylakoid membrane. It catalyses the reaction ATP + H2O + 4 H(+)(in) = ADP + phosphate + 5 H(+)(out). Functionally, produces ATP from ADP in the presence of a proton gradient across the membrane. The catalytic sites are hosted primarily by the beta subunits. The chain is ATP synthase subunit beta, chloroplastic from Hyacinthoides non-scripta (English bluebell).